We begin with the raw amino-acid sequence, 309 residues long: MSIRIIPQDELGSSEKRTADYIPPLLFPRLKNLYNRRAERLRELAENNPLGDFLRFAALIAHAQEVVLYDHPLQIDLTARIKEANDQGKPPLDIHVLPRDKHWHTLLQSLIAELKPEMSGPALAVIENLEKASALELEEMASALFAADFALVSSDKAPFIWAALSLYWAQMASLIPGKARAEYGEARQFCPVCGSMPVTSMVQIGTTQGLRYLHCNLCETEWHVVRIKCSNCEQTRDLNYWSLENENAAVKAESCGDCGTYLKILYQEKDPKVEAVADDLATLVLDAHMEQEGFARSSINPFLFPGEGE.

The protein belongs to the FdhE family.

The protein localises to the cytoplasm. Functionally, necessary for formate dehydrogenase activity. This is Protein FdhE homolog from Enterobacter sp. (strain 638).